The sequence spans 577 residues: Phosphoethanolamine transferase CptA (577 aa).

Transmembrane regions (helical) follow at residues 17–37 (LGWA…IIYL), 45–65 (GLRD…LFPG), 69–89 (VIAA…LSYY), 119–139 (YFSL…ILLW), and 154–174 (LVSF…NTFI).

Belongs to the phosphoethanolamine transferase family. EptC/CptA subfamily.

Its subcellular location is the cell inner membrane. It functions in the pathway bacterial outer membrane biogenesis; LPS core biosynthesis. Its function is as follows. Catalyzes the addition of a phosphoethanolamine moiety to the outer membrane lipopolysaccharide core. The protein is Phosphoethanolamine transferase CptA (cptA) of Salmonella typhimurium (strain LT2 / SGSC1412 / ATCC 700720).